Consider the following 142-residue polypeptide: Large ribosomal subunit protein uL11 (142 aa).

It belongs to the universal ribosomal protein uL11 family. Part of the ribosomal stalk of the 50S ribosomal subunit. Interacts with L10 and the large rRNA to form the base of the stalk. L10 forms an elongated spine to which L12 dimers bind in a sequential fashion forming a multimeric L10(L12)X complex. Post-translationally, one or more lysine residues are methylated.

Functionally, forms part of the ribosomal stalk which helps the ribosome interact with GTP-bound translation factors. This chain is Large ribosomal subunit protein uL11, found in Rhizobium meliloti (strain 1021) (Ensifer meliloti).